The sequence spans 260 residues: Snake venom serine protease KN5 (260 aa).

Residues 1-18 (MVLIRVLANLLILQLSYA) form the signal peptide. Positions 19 to 24 (QKSSEL) are excised as a propeptide. A Peptidase S1 domain is found at 25–251 (VIGGDECNIN…HLDWIQSIIA (227 aa)). Intrachain disulfides connect Cys-31/Cys-165, Cys-100/Cys-258, Cys-144/Cys-212, Cys-176/Cys-191, and Cys-202/Cys-227. His-67 acts as the Charge relay system in catalysis. An N-linked (GlcNAc...) asparagine glycan is attached at Asn-105. The active-site Charge relay system is Asp-112. 2 N-linked (GlcNAc...) asparagine glycosylation sites follow: Asn-124 and Asn-172. The Charge relay system role is filled by Ser-206. N-linked (GlcNAc...) asparagine glycans are attached at residues Asn-213 and Asn-255.

The protein belongs to the peptidase S1 family. Snake venom subfamily. As to quaternary structure, monomer. As to expression, expressed by the venom gland.

It localises to the secreted. In terms of biological role, snake venom serine protease that may act in the hemostasis system of the prey. This chain is Snake venom serine protease KN5, found in Trimeresurus stejnegeri (Chinese green tree viper).